Consider the following 102-residue polypeptide: Small ribosomal subunit protein uS10 (102 aa).

This sequence belongs to the universal ribosomal protein uS10 family. In terms of assembly, part of the 30S ribosomal subunit.

Its function is as follows. Involved in the binding of tRNA to the ribosomes. This Sulfurihydrogenibium sp. (strain YO3AOP1) protein is Small ribosomal subunit protein uS10.